The primary structure comprises 377 residues: RNA polymerase sigma factor SigA (377 aa).

Residues 72–92 (EVSNLRQGEDHDGNDNDDFNF) are disordered. Residues 144 to 214 (LAEANLRLVV…TRAIADQART (71 aa)) form a sigma-70 factor domain-2 region. Residues 168-171 (DLIQ) carry the Interaction with polymerase core subunit RpoC motif. The tract at residues 223-299 (ETINKLIRVS…DQEALTPADA (77 aa)) is sigma-70 factor domain-3. The sigma-70 factor domain-4 stretch occupies residues 312 to 365 (VLDTLTEREENVLRLRFGLDDGRTRTLEEVGKVFGVTRERIRQIEAKALRKLRH). A DNA-binding region (H-T-H motif) is located at residues 338 to 357 (LEEVGKVFGVTRERIRQIEA).

It belongs to the sigma-70 factor family. RpoD/SigA subfamily. In terms of assembly, interacts transiently with the RNA polymerase catalytic core.

It is found in the cytoplasm. Sigma factors are initiation factors that promote the attachment of RNA polymerase to specific initiation sites and are then released. This sigma factor is the primary sigma factor during exponential growth. In Bacillus sp, this protein is RNA polymerase sigma factor SigA.